A 1104-amino-acid polypeptide reads, in one-letter code: Mitogen-activated protein kinase kinase kinase 9 (1104 aa).

A compositionally biased stretch (low complexity) spans 12–22 (ASAAAAAPPGE). The tract at residues 12–47 (ASAAAAAPPGEDGAGAGAEEEEEEEEEAAAAVGPGE) is disordered. Over residues 29–39 (AEEEEEEEEEA) the composition is skewed to acidic residues. Residues 52 to 116 (APLPYWTAVF…PSNYVTPRSA (65 aa)) enclose the SH3 domain. A Protein kinase domain is found at 144–412 (LTLEEIIGIG…LTTIEESGFF (269 aa)). Residues 150 to 158 (IGIGGFGKV) and Lys-171 each bind ATP. Asp-268 functions as the Proton acceptor in the catalytic mechanism. Phosphothreonine; by autocatalysis occurs at positions 304 and 305. Residue Ser-308 is modified to Phosphoserine; by autocatalysis. Thr-312 carries the post-translational modification Phosphothreonine; by autocatalysis. Leucine-zipper stretches follow at residues 430 to 451 (IQEMFDQLRAKEKELRTWEEEL) and 465 to 486 (LRRREQELAEREIDILERELNI). Disordered stretches follow at residues 532–636 (ASPT…PHFH), 675–742 (MEDE…LKRG), 781–819 (EEPEPPAREEKKRREGLFQRSSRPRRSTSPPSRKLFKKE), and 890–1038 (RDPN…CFAS). Ser-533 carries the phosphoserine modification. Polar residues-rich tracts occupy residues 566–575 (PGESSKTWGR) and 723–739 (PVNSATSTPQLTPTNSL). Residues 785 to 797 (PPAREEKKRREGL) are compositionally biased toward basic and acidic residues. Residues 893 to 910 (NQSLTPTHVTLTTPSQPS) show a composition bias toward polar residues. Positions 929-944 (SRSPSSNGLSPSPGAG) are enriched in low complexity. Over residues 1014-1038 (HARSTSPANSSSTETPSNLDSCFAS) the composition is skewed to polar residues.

It belongs to the protein kinase superfamily. STE Ser/Thr protein kinase family. MAP kinase kinase kinase subfamily. In terms of assembly, homodimer. Mg(2+) is required as a cofactor. In terms of processing, autophosphorylation on serine and threonine residues within the activation loop plays a role in enzyme activation. Thr-312 is likely to be the main autophosphorylation site. Autophosphorylation also occurs on Thr-304 and Ser-308. As to expression, expressed in epithelial tumor cell lines of colonic, breast and esophageal origin.

The enzyme catalyses L-seryl-[protein] + ATP = O-phospho-L-seryl-[protein] + ADP + H(+). It carries out the reaction L-threonyl-[protein] + ATP = O-phospho-L-threonyl-[protein] + ADP + H(+). With respect to regulation, homodimerization via the leucine zipper domains is required for autophosphorylation of multiple sites in the activation loop and subsequent activation. Autophosphorylation at Thr-312 is the key step in activation of MAP3K9/MLK1 and is required for full phosphorylation. Autophosphorylation at Thr-304 and Ser-308 have been shown to be of secondary importance in the activation of MAP3K9/MLK1. CEP-1347 and many indolocarbazole analogs have been shown to act as inhibitors of MAP3K9/MLK1 activity. In terms of biological role, serine/threonine kinase which acts as an essential component of the MAP kinase signal transduction pathway. Plays an important role in the cascades of cellular responses evoked by changes in the environment. Once activated, acts as an upstream activator of the MKK/JNK signal transduction cascade through the phosphorylation of MAP2K4/MKK4 and MAP2K7/MKK7 which in turn activate the JNKs. The MKK/JNK signaling pathway regulates stress response via activator protein-1 (JUN) and GATA4 transcription factors. Also plays a role in mitochondrial death signaling pathway, including the release cytochrome c, leading to apoptosis. The sequence is that of Mitogen-activated protein kinase kinase kinase 9 (MAP3K9) from Homo sapiens (Human).